A 423-amino-acid chain; its full sequence is Serine hydroxymethyltransferase (423 aa).

(6S)-5,6,7,8-tetrahydrofolate-binding positions include Leu-126 and 130-132 (GHL). The residue at position 235 (Lys-235) is an N6-(pyridoxal phosphate)lysine.

It belongs to the SHMT family. Homodimer. The cofactor is pyridoxal 5'-phosphate.

The protein localises to the cytoplasm. The catalysed reaction is (6R)-5,10-methylene-5,6,7,8-tetrahydrofolate + glycine + H2O = (6S)-5,6,7,8-tetrahydrofolate + L-serine. The protein operates within one-carbon metabolism; tetrahydrofolate interconversion. It participates in amino-acid biosynthesis; glycine biosynthesis; glycine from L-serine: step 1/1. Functionally, catalyzes the reversible interconversion of serine and glycine with tetrahydrofolate (THF) serving as the one-carbon carrier. This reaction serves as the major source of one-carbon groups required for the biosynthesis of purines, thymidylate, methionine, and other important biomolecules. Also exhibits THF-independent aldolase activity toward beta-hydroxyamino acids, producing glycine and aldehydes, via a retro-aldol mechanism. The chain is Serine hydroxymethyltransferase from Sorangium cellulosum (strain So ce56) (Polyangium cellulosum (strain So ce56)).